A 344-amino-acid polypeptide reads, in one-letter code: Outer membrane protein B (344 aa).

The signal sequence occupies residues 1–30 (MNSKMLKHLRLATLSFSMFFGIVSSPAVYA).

Belongs to the chlamydial OMP family.

The protein localises to the cell outer membrane. In Chlamydia pneumoniae (Chlamydophila pneumoniae), this protein is Outer membrane protein B (ompB).